A 557-amino-acid chain; its full sequence is Resveratrol cleavage oxygenase 1 (557 aa).

Residues 1-46 (MAILNDPPSSTTILSLHTPDVPPPSKPTPATTSHPQDSRNPRNLTS) form a disordered region. The piceatannol site is built by Y144 and K177. Trans-resveratrol is bound by residues Y144 and K177. Positions 211, 262, and 334 each coordinate Fe cation. Position 404 (E404) interacts with piceatannol. Residue E404 coordinates trans-resveratrol. Residue H523 participates in Fe cation binding.

The protein belongs to the carotenoid oxygenase family. Fe(2+) serves as cofactor.

It catalyses the reaction trans-resveratrol + O2 = 3,5-dihydroxybenzaldehyde + 4-hydroxybenzaldehyde. The enzyme catalyses piceatannol + O2 = 3,5-dihydroxybenzaldehyde + 3,4-dihydroxybenzaldehyde. Dioxygenase that cleaves the interphenyl C-alpha-C-beta double bond of resveratrol to yield 3,5-dihydroxybenzaldehyde and 4-hydroxybenzaldehyde. Also cleaves piceatannol, a compound that differs from resveratrol only in the occurrence of an additional hydroxyl group, which leads to the production of 3,4-dihydroxybenzaldehyde and 3,5-hydroxybenzaldehyde. This is Resveratrol cleavage oxygenase 1 from Botryotinia fuckeliana (strain B05.10) (Noble rot fungus).